The following is a 510-amino-acid chain: Indoleacetate--CoA ligase (510 aa).

This sequence belongs to the ATP-dependent AMP-binding enzyme family. Monomer.

It carries out the reaction (indol-3-yl)acetate + ATP + CoA = (indol-3-yl)acetyl-CoA + AMP + diphosphate. The catalysed reaction is (indol-3-yl)acetate + ATP + H(+) = (indol-3-yl)acetyl-AMP + diphosphate. It catalyses the reaction (indol-3-yl)acetyl-AMP + CoA = (indol-3-yl)acetyl-CoA + AMP + H(+). Inhibited by high concentrations of substrates, and by the synthetic auxin compound 2,4-dichlorophenoxyacetate (2,4-D), which does not serve as substrate. Involved in degradation of indoleacetate, the most common member of the auxin class of plant hormones. Highly specific indoleacetate-CoA ligase which catalyzes the ATP-dependent activation of indoleacetate (IAA) to indoleacetyl-CoA. Also activates some closely related compounds such as the non-physiological compound (2-naphthyl)acetate and phenylacetate, which seems to be a fortuitous substrate for IaaB. The chain is Indoleacetate--CoA ligase from Aromatoleum aromaticum (strain DSM 19018 / LMG 30748 / EbN1) (Azoarcus sp. (strain EbN1)).